The primary structure comprises 337 residues: Holliday junction branch migration complex subunit RuvB (337 aa).

The tract at residues 1–182 (MEDRMVSASY…FGVLSAMEFY (182 aa)) is large ATPase domain (RuvB-L). Residues Leu-21, Arg-22, Gly-63, Lys-66, Thr-67, Thr-68, Arg-172, Tyr-182, and Arg-219 each contribute to the ATP site. Mg(2+) is bound at residue Thr-67. The interval 183 to 253 (NEDELKEIIL…IAKNALSLLE (71 aa)) is small ATPAse domain (RuvB-S). The tract at residues 256–337 (GEGFDKIDNK…REFKEQTKLT (82 aa)) is head domain (RuvB-H). DNA is bound by residues Arg-311 and Arg-316.

This sequence belongs to the RuvB family. Homohexamer. Forms an RuvA(8)-RuvB(12)-Holliday junction (HJ) complex. HJ DNA is sandwiched between 2 RuvA tetramers; dsDNA enters through RuvA and exits via RuvB. An RuvB hexamer assembles on each DNA strand where it exits the tetramer. Each RuvB hexamer is contacted by two RuvA subunits (via domain III) on 2 adjacent RuvB subunits; this complex drives branch migration. In the full resolvosome a probable DNA-RuvA(4)-RuvB(12)-RuvC(2) complex forms which resolves the HJ.

The protein localises to the cytoplasm. The enzyme catalyses ATP + H2O = ADP + phosphate + H(+). In terms of biological role, the RuvA-RuvB-RuvC complex processes Holliday junction (HJ) DNA during genetic recombination and DNA repair, while the RuvA-RuvB complex plays an important role in the rescue of blocked DNA replication forks via replication fork reversal (RFR). RuvA specifically binds to HJ cruciform DNA, conferring on it an open structure. The RuvB hexamer acts as an ATP-dependent pump, pulling dsDNA into and through the RuvAB complex. RuvB forms 2 homohexamers on either side of HJ DNA bound by 1 or 2 RuvA tetramers; 4 subunits per hexamer contact DNA at a time. Coordinated motions by a converter formed by DNA-disengaged RuvB subunits stimulates ATP hydrolysis and nucleotide exchange. Immobilization of the converter enables RuvB to convert the ATP-contained energy into a lever motion, pulling 2 nucleotides of DNA out of the RuvA tetramer per ATP hydrolyzed, thus driving DNA branch migration. The RuvB motors rotate together with the DNA substrate, which together with the progressing nucleotide cycle form the mechanistic basis for DNA recombination by continuous HJ branch migration. Branch migration allows RuvC to scan DNA until it finds its consensus sequence, where it cleaves and resolves cruciform DNA. The protein is Holliday junction branch migration complex subunit RuvB of Clostridium novyi (strain NT).